We begin with the raw amino-acid sequence, 118 residues long: MITKPDKNKVRQKRHRRVRGKLSGTADRPRLNVFRSNTGIYAQVIDDVAGVTLASASTLDKEVSKGTKTEQAVVVGKLVAERAVAKGISEVVFDRGGYLYHGRVKALADAARENGLKF.

Positions 1-25 are disordered; the sequence is MITKPDKNKVRQKRHRRVRGKLSGT. Positions 10 to 20 are enriched in basic residues; that stretch reads VRQKRHRRVRG.

The protein belongs to the universal ribosomal protein uL18 family. Part of the 50S ribosomal subunit; part of the 5S rRNA/L5/L18/L25 subcomplex. Contacts the 5S and 23S rRNAs.

Functionally, this is one of the proteins that bind and probably mediate the attachment of the 5S RNA into the large ribosomal subunit, where it forms part of the central protuberance. This Streptococcus gordonii (strain Challis / ATCC 35105 / BCRC 15272 / CH1 / DL1 / V288) protein is Large ribosomal subunit protein uL18.